A 967-amino-acid chain; its full sequence is Isoleucine--tRNA ligase (967 aa).

The short motif at 64 to 74 (PYANGNIHIGH) is the 'HIGH' region element. E600 contacts L-isoleucyl-5'-AMP. The short motif at 641 to 645 (KQSKS) is the 'KMSKS' region element. K644 contributes to the ATP binding site.

The protein belongs to the class-I aminoacyl-tRNA synthetase family. IleS type 1 subfamily. As to quaternary structure, monomer.

It localises to the cytoplasm. The enzyme catalyses tRNA(Ile) + L-isoleucine + ATP = L-isoleucyl-tRNA(Ile) + AMP + diphosphate. Functionally, catalyzes the attachment of isoleucine to tRNA(Ile). As IleRS can inadvertently accommodate and process structurally similar amino acids such as valine, to avoid such errors it has two additional distinct tRNA(Ile)-dependent editing activities. One activity is designated as 'pretransfer' editing and involves the hydrolysis of activated Val-AMP. The other activity is designated 'posttransfer' editing and involves deacylation of mischarged Val-tRNA(Ile). In Agrobacterium fabrum (strain C58 / ATCC 33970) (Agrobacterium tumefaciens (strain C58)), this protein is Isoleucine--tRNA ligase.